The following is a 178-amino-acid chain: Arginine repressor (178 aa).

The tract at residues 1-20 (MTEAQEPEYGGPSVPQTRTA) is disordered.

The protein belongs to the ArgR family.

Its subcellular location is the cytoplasm. It functions in the pathway amino-acid biosynthesis; L-arginine biosynthesis [regulation]. In terms of biological role, regulates arginine biosynthesis genes. This is Arginine repressor from Streptomyces griseus subsp. griseus (strain JCM 4626 / CBS 651.72 / NBRC 13350 / KCC S-0626 / ISP 5235).